A 111-amino-acid polypeptide reads, in one-letter code: Large ribosomal subunit protein uL23 (111 aa).

Belongs to the universal ribosomal protein uL23 family. As to quaternary structure, part of the 50S ribosomal subunit. Contacts protein L29, and trigger factor when it is bound to the ribosome.

In terms of biological role, one of the early assembly proteins it binds 23S rRNA. One of the proteins that surrounds the polypeptide exit tunnel on the outside of the ribosome. Forms the main docking site for trigger factor binding to the ribosome. The sequence is that of Large ribosomal subunit protein uL23 from Chlamydia caviae (strain ATCC VR-813 / DSM 19441 / 03DC25 / GPIC) (Chlamydophila caviae).